A 159-amino-acid chain; its full sequence is Ribosomal RNA large subunit methyltransferase H (159 aa).

S-adenosyl-L-methionine-binding positions include Leu-76, Gly-108, and 127–132 (FSKMTF).

Belongs to the RNA methyltransferase RlmH family. Homodimer.

The protein resides in the cytoplasm. The enzyme catalyses pseudouridine(1915) in 23S rRNA + S-adenosyl-L-methionine = N(3)-methylpseudouridine(1915) in 23S rRNA + S-adenosyl-L-homocysteine + H(+). Specifically methylates the pseudouridine at position 1915 (m3Psi1915) in 23S rRNA. The sequence is that of Ribosomal RNA large subunit methyltransferase H from Clostridium kluyveri (strain NBRC 12016).